Here is a 188-residue protein sequence, read N- to C-terminus: Elongation factor P (188 aa).

This sequence belongs to the elongation factor P family.

It is found in the cytoplasm. It functions in the pathway protein biosynthesis; polypeptide chain elongation. In terms of biological role, involved in peptide bond synthesis. Stimulates efficient translation and peptide-bond synthesis on native or reconstituted 70S ribosomes in vitro. Probably functions indirectly by altering the affinity of the ribosome for aminoacyl-tRNA, thus increasing their reactivity as acceptors for peptidyl transferase. The polypeptide is Elongation factor P (Rickettsia peacockii (strain Rustic)).